Consider the following 524-residue polypeptide: Serine/threonine-protein phosphatase 2A 56 kDa regulatory subunit gamma isoform (524 aa).

M1 bears the N-acetylmethionine mark. The Nuclear localization signal signature appears at 472 to 489 (RKTVSDEARQAQKDPKKE). The interval 476-524 (SDEARQAQKDPKKERPLARRKSELPQDPHTKKALEAHCRADELVPQDGR) is disordered.

This sequence belongs to the phosphatase 2A regulatory subunit B56 family. In terms of assembly, PP2A consists of a common heterodimeric core enzyme, composed of PPP2CA a 36 kDa catalytic subunit (subunit C) and PPP2R1A a 65 kDa constant regulatory subunit (PR65 or subunit A), that associates with a variety of regulatory subunits. Proteins that associate with the core dimer include three families of regulatory subunits B (the R2/B/PR55/B55, R3/B''/PR72/PR130/PR59 and R5/B'/B56 families), the 48 kDa variable regulatory subunit, viral proteins, and cell signaling molecules. Interacts with SGO1. Interacts with SGO1; the interaction is direct. May interact with TP53. Interacts with IER3 and/or ERK kinases; regulates ERK dephosphorylation Interacts with CIP2A; this interaction stabilizes CIP2A. In terms of tissue distribution, highly expressed in testis, heart and spleen. Also found in brain and skeletal muscle.

It localises to the nucleus. Its subcellular location is the chromosome. The protein resides in the centromere. Its function is as follows. The B regulatory subunit might modulate substrate selectivity and catalytic activity, and might also direct the localization of the catalytic enzyme to a particular subcellular compartment. The PP2A-PPP2R5C holoenzyme may activate TP53 and play a role in DNA damage-induced inhibition of cell proliferation. PP2A-PPP2R5C may also regulate the ERK signaling pathway through ERK dephosphorylation. The protein is Serine/threonine-protein phosphatase 2A 56 kDa regulatory subunit gamma isoform (PPP2R5C) of Oryctolagus cuniculus (Rabbit).